A 195-amino-acid polypeptide reads, in one-letter code: Guanylate kinase (195 aa).

In terms of domain architecture, Guanylate kinase-like spans 7-186; it reads GVLLVLSSPS…SVEEISSILD (180 aa). 14–21 lines the ATP pocket; the sequence is SPSGAGKT.

Belongs to the guanylate kinase family.

The protein localises to the cytoplasm. The enzyme catalyses GMP + ATP = GDP + ADP. Its function is as follows. Essential for recycling GMP and indirectly, cGMP. The polypeptide is Guanylate kinase (Wolbachia sp. subsp. Brugia malayi (strain TRS)).